The following is a 793-amino-acid chain: E3 UFM1-protein ligase 1 (793 aa).

Alanine 2 bears the N-acetylalanine mark. The mediates interaction with DDRGK1 stretch occupies residues 2 to 200 (ADAWEEIRRL…RGLFSAITRP (199 aa)). The interval 2 to 212 (ADAWEEIRRL…VNSLVSKYGF (211 aa)) is required for E3 UFM1-protein ligase activity. An involved in CDK5RAP3-binding region spans residues 121 to 250 (DQLSEEVNDK…KAVFVPDIYS (130 aa)). The interval 200–400 (PTPVNSLVSK…NPVHLITEED (201 aa)) is mediates interaction with TRIP4. The segment at 410-473 (VNTSKKDKKD…SSHGGKKKPD (64 aa)) is disordered. Omega-N-methylarginine is present on arginine 433. A phosphoserine mark is found at serine 458 and serine 462. The mediates interaction with CDK5RAP3 stretch occupies residues 490-683 (IQDAPEEFIS…QLKVTEDPAL (194 aa)). At threonine 535 the chain carries Phosphothreonine. The disordered stretch occupies residues 742 to 765 (NKKTGQGEDPSSDELDKEQHDVTN). Residues serine 752 and serine 753 each carry the phosphoserine modification.

It belongs to the UFL1 family. Catalytic component of the UFM1 ribosome E3 ligase (UREL) complex, composed of UFL1, DDRGK1 and CDK5RAP3. Interacts with E2-like enzyme UFC1. Interacts with RELA. Interacts with NBN; promoting recruitment to double-strand breaks following DNA damage. Interacts (when phosphorylated) with YWHAG/14-3-3-gamma; sequestering UFL1 and preventing its association with PDCD1/PD-1 substrate. Post-translationally, ubiquitinated, leading to its degradation by the proteasome. Interaction with CDK5RAP3 protects both proteins against ubiquitination and degradation via the proteasome. Phosphorylated at Ser-462 by ATM, enhancing protein ligase activity and promoting ATM activation in a positive feedback loop. Phosphorylation at Thr-535 by AMPK promotes its interaction with YWHAG/14-3-3-gamma, thereby preventing UFL1 association with PDCD1/PD-1 substrate. In terms of tissue distribution, ubiquitously expressed with higher expression in pancreatic islets and other secretory tissues. In the embryonic brain at 17 dpc, detected in Sox2-positive neural stem cells and in Slc1a3/GLAST-positive radial glia. In perinatal brain, highly expressed in Slc1a3-positive Bergmann glia of the cerebellum. Continues to be expressed in Bergmann glia of adult brain at 16 weeks. Expressed in adult heart. Highly expressed in the intestinal exocrine cells.

It localises to the endoplasmic reticulum membrane. It is found in the cytoplasm. The protein localises to the cytosol. The protein resides in the nucleus. Its subcellular location is the chromosome. E3 protein ligase that mediates ufmylation, the covalent attachment of the ubiquitin-like modifier UFM1 to lysine residues on target proteins, and which plays a key role in various processes, such as ribosome recycling, response to DNA damage, interferon response or reticulophagy (also called ER-phagy). Catalyzes ufmylation of many protein, such as CD274/PD-L1, CDK5RAP3, CYB5R3, DDRGK1, EIF6, histone H4, MRE11, P4HB, PDCD1/PD-1, TRIP4, RPN1, RPS20/uS10, RPL10/uL16, RPL26/uL24, SYVN1/HRD1 and TP53/p53. As part of the UREL complex, plays a key role in ribosome recycling by catalyzing mono-ufmylation of RPL26/uL24 subunit of the 60S ribosome. Ufmylation of RPL26/uL24 occurs on free 60S ribosomes following ribosome dissociation: it weakens the junction between post-termination 60S subunits and SEC61 translocons, promoting release and recycling of the large ribosomal subunit from the endoplasmic reticulum membrane. Ufmylation of RPL26/uL24 and subsequent 60S ribosome recycling either take place after normal termination of translation or after ribosome stalling during cotranslational translocation at the endoplasmic reticulum. Involved in reticulophagy in response to endoplasmic reticulum stress by mediating ufmylation of proteins such as CYB5R3 and RPN1, thereby promoting lysosomal degradation of ufmylated proteins. Ufmylation in response to endoplasmic reticulum stress is essential for processes such as hematopoiesis, blood vessel morphogenesis or inflammatory response. Mediates ufmylation of DDRGK1 and CDK5RAP3; the role of these modifications is however unclear: as both DDRGK1 and CDK5RAP3 act as substrate adapters for ufmylation, it is uncertain whether ufmylation of these proteins is a collateral effect or is required for ufmylation. Acts as a negative regulator of T-cell activation by mediating ufmylation and stabilization of PDCD1/PD-1. Also involved in the response to DNA damage: recruited to double-strand break sites following DNA damage and mediates monoufmylation of histone H4 and ufmylation of MRE11. Mediates ufmylation of TP53/p53, promoting its stability. Catalyzes ufmylation of TRIP4, thereby playing a role in nuclear receptor-mediated transcription. Required for hematopoietic stem cell function and hematopoiesis. This chain is E3 UFM1-protein ligase 1, found in Mus musculus (Mouse).